Here is a 227-residue protein sequence, read N- to C-terminus: Cytochrome c oxidase subunit 2 (227 aa).

Over 1-14 the chain is Mitochondrial intermembrane; the sequence is MAYPFQLGLQDATS. A helical transmembrane segment spans residues 15–45; that stretch reads PIMEELLHFHDHTLMIVFLISSLVLYIISLM. Over 46 to 59 the chain is Mitochondrial matrix; that stretch reads LTTKLTHTSTMDAQ. A helical transmembrane segment spans residues 60-87; that stretch reads EVETVWTILPAIILILIALPSLRILYMM. Residues 88 to 227 are Mitochondrial intermembrane-facing; the sequence is DEINNPSLTV…YFETWSALMV (140 aa). Residues H161, C196, E198, C200, H204, and M207 each contribute to the Cu cation site. Residue E198 participates in Mg(2+) binding. The residue at position 218 (Y218) is a Phosphotyrosine.

The protein belongs to the cytochrome c oxidase subunit 2 family. In terms of assembly, component of the cytochrome c oxidase (complex IV, CIV), a multisubunit enzyme composed of 14 subunits. The complex is composed of a catalytic core of 3 subunits MT-CO1, MT-CO2 and MT-CO3, encoded in the mitochondrial DNA, and 11 supernumerary subunits COX4I, COX5A, COX5B, COX6A, COX6B, COX6C, COX7A, COX7B, COX7C, COX8 and NDUFA4, which are encoded in the nuclear genome. The complex exists as a monomer or a dimer and forms supercomplexes (SCs) in the inner mitochondrial membrane with NADH-ubiquinone oxidoreductase (complex I, CI) and ubiquinol-cytochrome c oxidoreductase (cytochrome b-c1 complex, complex III, CIII), resulting in different assemblies (supercomplex SCI(1)III(2)IV(1) and megacomplex MCI(2)III(2)IV(2)). Found in a complex with TMEM177, COA6, COX18, COX20, SCO1 and SCO2. Interacts with TMEM177 in a COX20-dependent manner. Interacts with COX20. Interacts with COX16. It depends on Cu cation as a cofactor.

It localises to the mitochondrion inner membrane. The enzyme catalyses 4 Fe(II)-[cytochrome c] + O2 + 8 H(+)(in) = 4 Fe(III)-[cytochrome c] + 2 H2O + 4 H(+)(out). Component of the cytochrome c oxidase, the last enzyme in the mitochondrial electron transport chain which drives oxidative phosphorylation. The respiratory chain contains 3 multisubunit complexes succinate dehydrogenase (complex II, CII), ubiquinol-cytochrome c oxidoreductase (cytochrome b-c1 complex, complex III, CIII) and cytochrome c oxidase (complex IV, CIV), that cooperate to transfer electrons derived from NADH and succinate to molecular oxygen, creating an electrochemical gradient over the inner membrane that drives transmembrane transport and the ATP synthase. Cytochrome c oxidase is the component of the respiratory chain that catalyzes the reduction of oxygen to water. Electrons originating from reduced cytochrome c in the intermembrane space (IMS) are transferred via the dinuclear copper A center (CU(A)) of subunit 2 and heme A of subunit 1 to the active site in subunit 1, a binuclear center (BNC) formed by heme A3 and copper B (CU(B)). The BNC reduces molecular oxygen to 2 water molecules using 4 electrons from cytochrome c in the IMS and 4 protons from the mitochondrial matrix. In Canis mesomelas elongae (Eastern African black-backed jackal), this protein is Cytochrome c oxidase subunit 2 (MT-CO2).